The sequence spans 259 residues: Pyrroloquinoline-quinone synthase (259 aa).

The protein belongs to the PqqC family.

The enzyme catalyses 6-(2-amino-2-carboxyethyl)-7,8-dioxo-1,2,3,4,7,8-hexahydroquinoline-2,4-dicarboxylate + 3 O2 = pyrroloquinoline quinone + 2 H2O2 + 2 H2O + H(+). Its pathway is cofactor biosynthesis; pyrroloquinoline quinone biosynthesis. In terms of biological role, ring cyclization and eight-electron oxidation of 3a-(2-amino-2-carboxyethyl)-4,5-dioxo-4,5,6,7,8,9-hexahydroquinoline-7,9-dicarboxylic-acid to PQQ. The polypeptide is Pyrroloquinoline-quinone synthase (Bradyrhizobium diazoefficiens (strain JCM 10833 / BCRC 13528 / IAM 13628 / NBRC 14792 / USDA 110)).